We begin with the raw amino-acid sequence, 116 residues long: Putative transmembrane protein ORF116 (116 aa).

A run of 3 helical transmembrane segments spans residues 20 to 40 (IVTL…AYAL), 53 to 73 (LLGG…TNSI), and 76 to 96 (FRGA…DVIN).

The protein resides in the host membrane. The sequence is that of Putative transmembrane protein ORF116 from Acidianus bottle-shaped virus (isolate Italy/Pozzuoli) (ABV).